The sequence spans 231 residues: Probable septum site-determining protein MinC (231 aa).

Residues 102-125 are disordered; the sequence is KEKAPRPAPAPQAPAQNTTPVTKT.

The protein belongs to the MinC family. As to quaternary structure, interacts with MinD and FtsZ.

Cell division inhibitor that blocks the formation of polar Z ring septums. Rapidly oscillates between the poles of the cell to destabilize FtsZ filaments that have formed before they mature into polar Z rings. Prevents FtsZ polymerization. This Escherichia coli O6:K15:H31 (strain 536 / UPEC) protein is Probable septum site-determining protein MinC.